The primary structure comprises 407 residues: Digeranylgeranylglycerophospholipid reductase (407 aa).

10 residues coordinate FAD: Ala15, Glu34, Cys45, Ala46, Gly48, Arg99, Ala123, Asp281, Gly293, and Ile294.

The protein belongs to the geranylgeranyl reductase family. DGGGPL reductase subfamily. FAD is required as a cofactor.

It carries out the reaction a 2,3-bis-O-phytanyl-sn-glycerol 1-phospholipid + 8 oxidized 2[4Fe-4S]-[ferredoxin] = a 2,3-bis-O-(geranylgeranyl)-sn-glycerol 1-phospholipid + 8 reduced 2[4Fe-4S]-[ferredoxin] + 16 H(+). It catalyses the reaction 2,3-bis-O-(phytanyl)-sn-glycerol 1-phosphate + 8 oxidized 2[4Fe-4S]-[ferredoxin] = 2,3-bis-O-(geranylgeranyl)-sn-glycerol 1-phosphate + 8 reduced 2[4Fe-4S]-[ferredoxin] + 16 H(+). The catalysed reaction is a 2,3-bis-O-phytanyl-sn-glycerol 1-phospholipid + 8 A = a 2,3-bis-O-(geranylgeranyl)-sn-glycerol 1-phospholipid + 8 AH2. The enzyme catalyses CDP-2,3-bis-O-(geranylgeranyl)-sn-glycerol + 8 AH2 = CDP-2,3-bis-O-(phytanyl)-sn-glycerol + 8 A. It carries out the reaction archaetidylserine + 8 AH2 = 2,3-bis-O-phytanyl-sn-glycero-3-phospho-L-serine + 8 A. It participates in membrane lipid metabolism; glycerophospholipid metabolism. Its function is as follows. Is involved in the reduction of 2,3-digeranylgeranylglycerophospholipids (unsaturated archaeols) into 2,3-diphytanylglycerophospholipids (saturated archaeols) in the biosynthesis of archaeal membrane lipids. Catalyzes the formation of archaetidic acid (2,3-di-O-phytanyl-sn-glyceryl phosphate) from 2,3-di-O-geranylgeranylglyceryl phosphate (DGGGP) via the hydrogenation of each double bond of the isoprenoid chains. Requires the adjacently encoded ferredoxin MA_1485 as the electron donor. Is also probably able to reduce double bonds of geranyl groups in CDP-2,3-bis-O-(geranylgeranyl)-sn-glycerol and archaetidylserine, thus acting at various stages in the biosynthesis of archaeal membrane lipids. In Methanosarcina acetivorans (strain ATCC 35395 / DSM 2834 / JCM 12185 / C2A), this protein is Digeranylgeranylglycerophospholipid reductase.